We begin with the raw amino-acid sequence, 466 residues long: MEPELLVRKVSALQACVRGFLVRRQFQSLRAEYEAIVREVEGDLGTLQWTEGRIPRPRFLPEKAKSHQTWKAGDRVANPEQGLWNHFPCEESEGEATWEEMVLKKSGESSANQGSLCRDHSSWLQMKQNRKPSQEKTRDTTRMENPEATDQRLPHSQPQLQELQYHRSHLAMELLWLQQAINSRKEYLLLKQTLRSPEAGPIREEPRVFLEHGEQACERDQSQPSAPLEDQSYRDRTTGELEQEDDSCHRVKSPHRSPGSLATTQKNIAGAKCREPCYSKSGPPSSIPSNSQALGDRLTKGPDDGRQTFGGTCLLQMKILEDQTPRGLKPRNHCPRKSRTQLSALYEDSNIKEMSPRKLDHKEPDCRTVRTQELGLSEDHIIWDGTLGGPEHSVLDLWRTKPPKGQAPTDRSSRDGTSNEPSHEGQKKQRTIPWRSKSPEILSSTKAGCTGEEQWRGRPWKTEPPG.

In terms of domain architecture, IQ spans 6-35 (LVRKVSALQACVRGFLVRRQFQSLRAEYEA). Disordered stretches follow at residues 105 to 157 (KSGE…PHSQ), 214 to 233 (EQAC…DQSY), 238 to 310 (TGEL…QTFG), and 394 to 466 (VLDL…EPPG). Basic and acidic residues predominate over residues 132–153 (PSQEKTRDTTRMENPEATDQRL). The span at 282 to 293 (GPPSSIPSNSQA) shows a compositional bias: polar residues. Residues 297 to 306 (RLTKGPDDGR) show a composition bias toward basic and acidic residues. Ser438 is subject to Phosphoserine.

This Homo sapiens (Human) protein is IQ domain-containing protein C (IQCC).